The primary structure comprises 366 residues: Endophilin-A (366 aa).

Residues 18 to 248 (TEKMGGAEGT…LQEKRSEAES (231 aa)) form the BAR domain. Residues 227–247 (QCADVLRGLQETLQEKRSEAE) are a coiled coil. The tract at residues 266-295 (GGGGGLNEDGTPSHISSSASPLPSPMRSPA) is disordered. Low complexity predominate over residues 277–294 (PSHISSSASPLPSPMRSP). In terms of domain architecture, SH3 spans 305–364 (QQQPCCQALYDFDPENPGELGFKENDIITLLNRVDDNWYEGSVNGRTGYFPQSYVQVQVP).

This sequence belongs to the endophilin family.

It localises to the cytoplasm. It is found in the membrane. Required presynaptically at the neuromuscular junction. Implicated in synaptic vesicle endocytosis. This is Endophilin-A from Drosophila willistoni (Fruit fly).